Here is a 184-residue protein sequence, read N- to C-terminus: Isopentenyl-diphosphate Delta-isomerase (184 aa).

Mn(2+) is bound by residues His-25 and His-32. Residues 30 to 164 (PLHLAFSCWL…PWAFSPWMVL (135 aa)) enclose the Nudix hydrolase domain. Cys-67 is a catalytic residue. His-69 is a Mn(2+) binding site. Mg(2+) is bound at residue Glu-87. 2 residues coordinate Mn(2+): Glu-114 and Glu-116. Residue Glu-116 is part of the active site.

Belongs to the IPP isomerase type 1 family. As to quaternary structure, homodimer. Requires Mg(2+) as cofactor. Mn(2+) serves as cofactor.

Its subcellular location is the cytoplasm. It catalyses the reaction isopentenyl diphosphate = dimethylallyl diphosphate. It participates in isoprenoid biosynthesis; dimethylallyl diphosphate biosynthesis; dimethylallyl diphosphate from isopentenyl diphosphate: step 1/1. In terms of biological role, catalyzes the 1,3-allylic rearrangement of the homoallylic substrate isopentenyl (IPP) to its highly electrophilic allylic isomer, dimethylallyl diphosphate (DMAPP). The sequence is that of Isopentenyl-diphosphate Delta-isomerase from Klebsiella pneumoniae (strain 342).